The sequence spans 394 residues: Phosphopentomutase (394 aa).

6 residues coordinate Mn(2+): aspartate 14, aspartate 287, histidine 292, aspartate 328, histidine 329, and histidine 340.

This sequence belongs to the phosphopentomutase family. Mn(2+) is required as a cofactor.

The protein localises to the cytoplasm. The catalysed reaction is 2-deoxy-alpha-D-ribose 1-phosphate = 2-deoxy-D-ribose 5-phosphate. It catalyses the reaction alpha-D-ribose 1-phosphate = D-ribose 5-phosphate. It functions in the pathway carbohydrate degradation; 2-deoxy-D-ribose 1-phosphate degradation; D-glyceraldehyde 3-phosphate and acetaldehyde from 2-deoxy-alpha-D-ribose 1-phosphate: step 1/2. In terms of biological role, isomerase that catalyzes the conversion of deoxy-ribose 1-phosphate (dRib-1-P) and ribose 1-phosphate (Rib-1-P) to deoxy-ribose 5-phosphate (dRib-5-P) and ribose 5-phosphate (Rib-5-P), respectively. This Listeria monocytogenes serotype 4b (strain CLIP80459) protein is Phosphopentomutase.